Consider the following 79-residue polypeptide: Beta-defensin 130 (79 aa).

The signal sequence occupies residues 1–22 (MKLHSLISVLLLFVTLIPKGKT). Cystine bridges form between Cys38–Cys53 and Cys43–Cys60.

The protein belongs to the beta-defensin family.

It is found in the secreted. In terms of biological role, antimicrobial host-defense peptide. This Pan troglodytes (Chimpanzee) protein is Beta-defensin 130.